Here is a 1406-residue protein sequence, read N- to C-terminus: Protein crumbs homolog 1 (1406 aa).

Positions 1 to 25 (MALKNINYLLIFYLSFSLLIYIKNS) are cleaved as a signal peptide. The Extracellular portion of the chain corresponds to 26–1347 (FCNKNNTRCL…DDLISDIFTT (1322 aa)). 3 N-linked (GlcNAc...) asparagine glycosylation sites follow: Asn30, Asn41, and Asn42. 3 EGF-like domains span residues 30–68 (NNTR…KDCD), 70–108 (MKDP…TICE), and 110–146 (TIGS…RFCE). Intrachain disulfides connect Cys34-Cys45, Cys39-Cys54, Cys56-Cys67, Cys74-Cys85, Cys79-Cys96, Cys98-Cys107, Cys114-Cys125, Cys119-Cys134, Cys136-Cys145, Cys152-Cys163, Cys157-Cys172, Cys174-Cys183, Cys190-Cys201, Cys195-Cys210, Cys212-Cys221, Cys228-Cys239, Cys233-Cys248, Cys250-Cys259, Cys266-Cys277, and Cys271-Cys286. One can recognise an EGF-like 4; calcium-binding domain in the interval 148-184 (DHDECASSPCQNGAVCQDGIDGYSCFCVPGYQGRHCD). An EGF-like 5; calcium-binding domain is found at 186–222 (EVDECASDPCKNEATCLNEIGRYTCICPHNYSGVNCE). Asn215 carries an N-linked (GlcNAc...) asparagine glycan. The EGF-like 6; calcium-binding domain maps to 224-260 (EIDECWSQPCLNGATCQDALGAYFCDCAPGFLGDHCE). In terms of domain architecture, EGF-like 7; calcium-binding spans 262–299 (NTDECASQPCLHGGLCVDGENRYSCNCTGSGFTGTHCE). A glycan (N-linked (GlcNAc...) asparagine) is linked at Asn287. Cystine bridges form between Cys288–Cys298, Cys305–Cys316, Cys310–Cys325, Cys327–Cys336, Cys343–Cys354, Cys348–Cys383, Cys385–Cys394, Cys401–Cys412, Cys406–Cys421, Cys423–Cys438, Cys445–Cys456, Cys450–Cys469, and Cys471–Cys480. EGF-like domains are found at residues 301–337 (LMPL…AQCE) and 339–395 (DLNE…IHCE). N-linked (GlcNAc...) asparagine glycosylation is found at Asn313 and Asn322. The EGF-like 10; calcium-binding domain occupies 397-439 (DVNECSSNPCQNGGTCENLPGNYTCHCPFDNLSRTFYGGRDCS). Asn418, Asn427, and Asn453 each carry an N-linked (GlcNAc...) asparagine glycan. An EGF-like 11 domain is found at 441–481 (ILLGCTHQQCLNNGTCIPHFQDGQHGFSCLCPSGYTGSLCE). Positions 485–670 (TLSFEGDGFL…GSSLNVKAGC (186 aa)) constitute a Laminin G-like 1 domain. 3 N-linked (GlcNAc...) asparagine glycosylation sites follow: Asn550, Asn561, and Asn657. Intrachain disulfides connect Cys642/Cys670, Cys676/Cys687, Cys681/Cys696, and Cys698/Cys707. An EGF-like 12 domain is found at 672–708 (RKDWCESQPCQSRGRCINLWLSYQCDCHRPYEGPNCL). One can recognise a Laminin G-like 2 domain in the interval 714–885 (GRFGQDDSTG…PVLVNVTQGC (172 aa)). 3 N-linked (GlcNAc...) asparagine glycosylation sites follow: Asn757, Asn871, and Asn880. 6 cysteine pairs are disulfide-bonded: Cys851–Cys885, Cys891–Cys902, Cys896–Cys911, Cys913–Cys922, Cys928–Cys939, and Cys933–Cys948. EGF-like domains follow at residues 887 to 923 (GDNS…KACE) and 924 to 960 (EVQW…QSGQ). Residues 950 to 1137 (ANAVFNGQSG…ISTNSVVTGC (188 aa)) form the Laminin G-like 3 domain. Asn968, Asn975, and Asn1000 each carry an N-linked (GlcNAc...) asparagine glycan. Cystine bridges form between Cys1096/Cys1137, Cys1143/Cys1154, Cys1148/Cys1163, Cys1165/Cys1174, Cys1181/Cys1191, Cys1186/Cys1200, Cys1202/Cys1211, Cys1218/Cys1229, Cys1223/Cys1238, Cys1240/Cys1249, Cys1259/Cys1274, Cys1268/Cys1283, Cys1285/Cys1294, Cys1301/Cys1312, Cys1306/Cys1321, and Cys1323/Cys1332. Residues 1139-1175 (QLNVCNSNPCLHGGNCEDIYSSYHCSCPLGWSGKHCE) enclose the EGF-like 15 domain. Residues 1177–1212 (NIDECFSNPCIHGNCSDRVAAYHCTCEPGYTGVNCE) enclose the EGF-like 16; calcium-binding domain. N-linked (GlcNAc...) asparagine glycosylation is present at Asn1190. EGF-like domains are found at residues 1214–1250 (DIDN…KFCR) and 1255–1295 (PSTV…EWCE). N-linked (GlcNAc...) asparagine glycosylation is found at Asn1243, Asn1265, and Asn1273. The EGF-like 19; calcium-binding domain occupies 1297–1333 (DIDECASDPCVNGGLCQDLLNKFQCLCDVAFAGERCE). Residues 1348–1368 (IGSVTVALLLILLLAIVASVV) form a helical membrane-spanning segment. Over 1369–1406 (TSNKRATQGTYSPSRQEKEGSRVEMWNLMPPPAMERLI) the chain is Cytoplasmic. An interaction with EPB41L5 region spans residues 1370-1406 (SNKRATQGTYSPSRQEKEGSRVEMWNLMPPPAMERLI).

This sequence belongs to the Crumbs protein family. In terms of assembly, component of a complex composed of PALS1, CRB1 and EPB41L5. Within the complex, interacts (via intracellular domain) with PALS1 and EPB41L5 (via FERM domain). Forms a complex with MPP4 and PALS1. Interacts with MPDZ/MUPP1 and MPP4. Extensively glycosylated. In terms of tissue distribution, preferential expression in retina, also expressed in brain, testis, fetal brain and fetal eye. Expressed at the outer limiting membrane and apical to adherens junctions in the retina.

It localises to the apical cell membrane. It is found in the secreted. The protein resides in the cell projection. Its subcellular location is the cilium. The protein localises to the photoreceptor outer segment. It localises to the photoreceptor inner segment. Functionally, plays a role in photoreceptor morphogenesis in the retina. May maintain cell polarization and adhesion. This chain is Protein crumbs homolog 1, found in Homo sapiens (Human).